A 99-amino-acid chain; its full sequence is Plastocyanin A'/A'' (99 aa).

The region spanning 1–99 (IEVLLGSDDG…AGMVGKVTVN (99 aa)) is the Plastocyanin-like domain. Cu cation contacts are provided by histidine 37, cysteine 84, histidine 87, and methionine 92.

It belongs to the plastocyanin family. Cu(2+) serves as cofactor.

The protein localises to the plastid. It is found in the chloroplast thylakoid membrane. Participates in electron transfer between P700 and the cytochrome b6-f complex in photosystem I. This Nicotiana tabacum (Common tobacco) protein is Plastocyanin A'/A''.